Reading from the N-terminus, the 181-residue chain is Inner membrane-spanning protein YciB (181 aa).

The next 5 helical transmembrane spans lie at L10–I30, M50–D70, A72–S92, V118–F138, and F148–L168.

The protein belongs to the YciB family.

It localises to the cell inner membrane. In terms of biological role, plays a role in cell envelope biogenesis, maintenance of cell envelope integrity and membrane homeostasis. The sequence is that of Inner membrane-spanning protein YciB from Shewanella sp. (strain ANA-3).